We begin with the raw amino-acid sequence, 189 residues long: Small ribosomal subunit protein uS7 (189 aa).

This sequence belongs to the universal ribosomal protein uS7 family. Component of the small ribosomal subunit.

It localises to the cytoplasm. This Encephalitozoon cuniculi (strain GB-M1) (Microsporidian parasite) protein is Small ribosomal subunit protein uS7 (RPS5).